Here is a 224-residue protein sequence, read N- to C-terminus: Germin-like protein 1-2 (224 aa).

A signal peptide spans 1–29; that stretch reads MASSRSVVLRVLVAVAVVAAAGAPRLAVA. The cysteines at positions 38 and 53 are disulfide-linked. The Cupin type-1 domain maps to 67-215; that stretch reads DAIVQAPSTS…TFLMGEDEVG (149 aa). A glycan (N-linked (GlcNAc...) asparagine) is linked at Asn82. Residues His115, His117, Glu122, and His161 each contribute to the Mn(2+) site. Asn170 carries N-linked (GlcNAc...) asparagine glycosylation.

This sequence belongs to the germin family. In terms of assembly, oligomer (believed to be a pentamer but probably hexamer).

The protein resides in the secreted. It is found in the extracellular space. Its subcellular location is the apoplast. In terms of biological role, may play a role in plant defense. Probably has no oxalate oxidase activity even if the active site is conserved. The protein is Germin-like protein 1-2 of Oryza sativa subsp. japonica (Rice).